Here is a 284-residue protein sequence, read N- to C-terminus: Probable 3-mercaptopyruvate sulfurtransferase (284 aa).

Rhodanese domains lie at 17 to 138 and 168 to 281; these read SEPD…ALTN and GQPG…RPVA. Arg182 contributes to the substrate binding site. The Cysteine persulfide intermediate role is filled by Cys241. The substrate specificity stretch occupies residues 241–247; that stretch reads CGSGVTA.

The protein localises to the cytoplasm. The catalysed reaction is 2-oxo-3-sulfanylpropanoate + [thioredoxin]-dithiol = [thioredoxin]-disulfide + hydrogen sulfide + pyruvate + H(+). Its function is as follows. Catalyzes the transfer of sulfur from 3-mercaptopyruvate to a thiol-containing acceptor to form an intramolecular disulfide releasing hydrogen sulfide and pyruvate. The protein is Probable 3-mercaptopyruvate sulfurtransferase (sseA) of Pseudomonas aeruginosa (strain ATCC 15692 / DSM 22644 / CIP 104116 / JCM 14847 / LMG 12228 / 1C / PRS 101 / PAO1).